We begin with the raw amino-acid sequence, 459 residues long: Exodeoxyribonuclease 7 large subunit (459 aa).

This sequence belongs to the XseA family. Heterooligomer composed of large and small subunits.

The protein resides in the cytoplasm. The enzyme catalyses Exonucleolytic cleavage in either 5'- to 3'- or 3'- to 5'-direction to yield nucleoside 5'-phosphates.. Bidirectionally degrades single-stranded DNA into large acid-insoluble oligonucleotides, which are then degraded further into small acid-soluble oligonucleotides. This Yersinia pestis bv. Antiqua (strain Antiqua) protein is Exodeoxyribonuclease 7 large subunit.